The chain runs to 1018 residues: Collagen, type I, alpha 1a (1018 aa).

Residues 1 to 10 (QMSAGYDDKS) are compositionally biased toward basic and acidic residues. Residues 1–991 (QMSAGYDDKS…SGEYWLDPDQ (991 aa)) form a disordered region. Residues 13–30 (MPVPGPMGPMGPRGPPGS) are compositionally biased toward pro residues. Positions 31–58 (PGASGPQGFTGPPGEPGEAGPSGAMGPR) are enriched in low complexity. The span at 67–81 (NGEDGESGKPGRGGE) shows a compositional bias: basic and acidic residues. Residues 126-136 (PRGNDGAAGAA) show a composition bias toward low complexity. The segment covering 138-151 (PPGPTGPAGPPGFP) has biased composition (pro residues). Positions 152–170 (GGPGAKGDAGAQGGRGPEG) are enriched in gly residues. 2 stretches are compositionally biased toward low complexity: residues 171 to 214 (PAGA…AGAP) and 223 to 261 (SGPQ…APGV). The span at 284–296 (GARGGPGGRGFPG) shows a compositional bias: gly residues. Composition is skewed to low complexity over residues 370–385 (VGAR…PGPK), 424–442 (AGPA…PGFQ), 452–510 (LPGE…QGMP), and 543–558 (RGLT…AGAT). Positions 568–577 (GPVGPGGARG) are enriched in gly residues. Low complexity-rich tracts occupy residues 591–627 (AGFA…AGPT) and 641–663 (PKGA…AGRV). A compositionally biased stretch (pro residues) spans 665 to 677 (PPGPSGNPGPPGP). 2 stretches are compositionally biased toward low complexity: residues 701–746 (EVGA…XXPG) and 775–795 (PGLA…NEGS). A compositionally biased stretch (pro residues) spans 819 to 829 (APGPPGAPGPV). Low complexity predominate over residues 843-862 (PAGPAGSAGPAGPRGPAGAP). Basic and acidic residues predominate over residues 865–876 (RGDKGESGEAGE). Residues 889–925 (SGSSGEQGPAGAAGPAGPRGPAGSAGSPGKDGMSGLP) are compositionally biased toward low complexity. Positions 932–1018 (GPRGGFDLGF…CTSHTGTWGK (87 aa)) constitute a Fibrillar collagen NC1 domain. Positions 948–959 (KAPDPFRDRDLE) are enriched in basic and acidic residues. The span at 963–973 (TLKSLSQQLEQ) shows a compositional bias: polar residues.

Belongs to the fibrillar collagen family.

The protein resides in the secreted. It is found in the extracellular space. It localises to the extracellular matrix. The sequence is that of Collagen, type I, alpha 1a from Epinephelus costae (Goldblotch grouper).